Here is a 943-residue protein sequence, read N- to C-terminus: 2-oxoglutarate dehydrogenase E1 component (943 aa).

Belongs to the alpha-ketoglutarate dehydrogenase family. Homodimer. Part of the 2-oxoglutarate dehydrogenase (OGDH) complex composed of E1 (2-oxoglutarate dehydrogenase), E2 (dihydrolipoamide succinyltransferase) and E3 (dihydrolipoamide dehydrogenase); the complex contains multiple copies of the three enzymatic components (E1, E2 and E3). The cofactor is thiamine diphosphate.

The enzyme catalyses N(6)-[(R)-lipoyl]-L-lysyl-[protein] + 2-oxoglutarate + H(+) = N(6)-[(R)-S(8)-succinyldihydrolipoyl]-L-lysyl-[protein] + CO2. Functionally, E1 component of the 2-oxoglutarate dehydrogenase (OGDH) complex which catalyzes the decarboxylation of 2-oxoglutarate, the first step in the conversion of 2-oxoglutarate to succinyl-CoA and CO(2). This Shouchella clausii (strain KSM-K16) (Alkalihalobacillus clausii) protein is 2-oxoglutarate dehydrogenase E1 component.